Consider the following 390-residue polypeptide: Lipid-A-disaccharide synthase (390 aa).

It belongs to the LpxB family.

The enzyme catalyses a lipid X + a UDP-2-N,3-O-bis[(3R)-3-hydroxyacyl]-alpha-D-glucosamine = a lipid A disaccharide + UDP + H(+). Its pathway is bacterial outer membrane biogenesis; LPS lipid A biosynthesis. In terms of biological role, condensation of UDP-2,3-diacylglucosamine and 2,3-diacylglucosamine-1-phosphate to form lipid A disaccharide, a precursor of lipid A, a phosphorylated glycolipid that anchors the lipopolysaccharide to the outer membrane of the cell. This Neisseria gonorrhoeae (strain ATCC 700825 / FA 1090) protein is Lipid-A-disaccharide synthase.